The chain runs to 194 residues: Adenylate kinase isoenzyme 1 (194 aa).

Met-1 carries the post-translational modification N-acetylmethionine. Gly-18–Thr-23 provides a ligand contact to ATP. At Ser-38 the chain carries Phosphoserine. The segment at Ser-38–Val-67 is NMP. AMP-binding positions include Thr-39, Arg-44, Gln-65–Val-67, Gly-94–Arg-97, and Gln-101. The segment at Lys-131–Asp-141 is LID. Arg-132 provides a ligand contact to ATP. Residues Arg-138 and Arg-149 each contribute to the AMP site. Position 177 (Gly-177) interacts with ATP.

Belongs to the adenylate kinase family. AK1 subfamily. As to quaternary structure, monomer. Mg(2+) is required as a cofactor.

The protein resides in the cytoplasm. It carries out the reaction a ribonucleoside 5'-phosphate + ATP = a ribonucleoside 5'-diphosphate + ADP. The catalysed reaction is AMP + ATP = 2 ADP. The enzyme catalyses dAMP + ATP = dADP + ADP. It catalyses the reaction dATP + AMP = dADP + ADP. It carries out the reaction dAMP + dATP = 2 dADP. The catalysed reaction is a 2'-deoxyribonucleoside 5'-diphosphate + ATP = a 2'-deoxyribonucleoside 5'-triphosphate + ADP. The enzyme catalyses a ribonucleoside 5'-diphosphate + ATP = a ribonucleoside 5'-triphosphate + ADP. It catalyses the reaction CDP + GTP = CTP + GDP. It carries out the reaction GDP + ATP = GTP + ADP. The catalysed reaction is UDP + ATP = UTP + ADP. The enzyme catalyses GTP + UDP = UTP + GDP. It catalyses the reaction dTDP + GTP = dTTP + GDP. It carries out the reaction dCDP + GTP = dCTP + GDP. The catalysed reaction is dGDP + ATP = dGTP + ADP. The enzyme catalyses dADP + GTP = dATP + GDP. It catalyses the reaction thiamine diphosphate + ADP = thiamine triphosphate + AMP. In terms of biological role, catalyzes the reversible transfer of the terminal phosphate group between ATP and AMP. Also displays broad nucleoside diphosphate kinase activity. Plays an important role in cellular energy homeostasis and in adenine nucleotide metabolism. Also catalyzes at a very low rate the synthesis of thiamine triphosphate (ThTP) from thiamine diphosphate (ThDP) and ADP. This is Adenylate kinase isoenzyme 1 from Sus scrofa (Pig).